Reading from the N-terminus, the 409-residue chain is uncharacterized protein (409 aa).

The next 12 helical transmembrane spans lie at 3-23 (IIVKIPVWMLLSLFILSPTTE), 43-63 (ITQITSTLYFLGFAVGILSLG), 73-93 (PIVLLGLFIYIVSSIISIFSV), 95-115 (IEMLMIARFIQAFGVSVGSVI), 135-155 (ILSPWLLFIPSLGSYIGGYII), 162-182 (YVFVFFSLIGTILLALYYKIL), 209-229 (ILWLYAFIIGAFNGIYYGFFI), 248-268 (KLAFLLSFSAIFGGFLGGYLI), 283-303 (FIFSLCGCILFVVNAFILEFI), 309-329 (LAISMIFVPMMIHIIGHSLLI), 346-366 (TAGSIFGAIYYIVIAAVTYCV), and 379-399 (LLCLVSSISSVISFYYICILY).

It belongs to the major facilitator superfamily. Bcr/CmlA family.

The protein localises to the cell inner membrane. This is an uncharacterized protein from Rickettsia typhi (strain ATCC VR-144 / Wilmington).